The chain runs to 249 residues: DNA polymerase sliding clamp 1 (249 aa).

Belongs to the PCNA family. In terms of assembly, forms heterodimers with PCNA2, which then recruit PCNA3; does not form homotrimers. The heterodimers interact with RfcS homotetramers. Heterotrimer which circularizes head-to-tail (head is at N-terminus, tail is at C-terminus) to form a toroid; DNA passes through its center. Replication factor C (RFC) is required to load the toroid on the DNA. Heterotrimer interacts, probably via this subunit, with flap endonuclease 1 (fen), Hjc, Dpo4, and XPF.

One of the sliding clamp subunits that acts as a moving platform for DNA processing. Responsible for tethering the catalytic subunit of DNA polymerase to DNA during high-speed replication. Heterotrimer stimulates the Holliday junction resolvase Hjc. DNA polymerase I, DNA ligase and the flap endonuclease may be constitutively associated with the PCNA heterotrimer forming a scanning complex able to couple DNA synthesis and Okazaki fragment maturation. The sequence is that of DNA polymerase sliding clamp 1 from Saccharolobus solfataricus (strain ATCC 35092 / DSM 1617 / JCM 11322 / P2) (Sulfolobus solfataricus).